Here is a 503-residue protein sequence, read N- to C-terminus: Probable cytosol aminopeptidase (503 aa).

Mn(2+)-binding residues include lysine 274 and aspartate 279. Lysine 286 is a catalytic residue. Residues aspartate 297, aspartate 356, and glutamate 358 each coordinate Mn(2+). Residue arginine 360 is part of the active site.

The protein belongs to the peptidase M17 family. Requires Mn(2+) as cofactor.

It localises to the cytoplasm. The enzyme catalyses Release of an N-terminal amino acid, Xaa-|-Yaa-, in which Xaa is preferably Leu, but may be other amino acids including Pro although not Arg or Lys, and Yaa may be Pro. Amino acid amides and methyl esters are also readily hydrolyzed, but rates on arylamides are exceedingly low.. It catalyses the reaction Release of an N-terminal amino acid, preferentially leucine, but not glutamic or aspartic acids.. Functionally, presumably involved in the processing and regular turnover of intracellular proteins. Catalyzes the removal of unsubstituted N-terminal amino acids from various peptides. The polypeptide is Probable cytosol aminopeptidase (Paraburkholderia phymatum (strain DSM 17167 / CIP 108236 / LMG 21445 / STM815) (Burkholderia phymatum)).